The sequence spans 228 residues: Cytochrome b6-f complex iron-sulfur subunit 1, chloroplastic (228 aa).

A chloroplast-targeting transit peptide spans 1-49 (MASSTLSPVTQLCSSKSGLSSVSQCLLVKPMKINSHGLGKDKRMKVKCM). The helical transmembrane segment at 72 to 92 (LLGALSLPTAGMLVPYGTFFV) threads the bilayer. A Rieske domain is found at 115–211 (ASEWLKTHPP…ADIDDGKVVF (97 aa)). Residues C157, H159, C175, and H178 each coordinate [2Fe-2S] cluster. Residues C162 and C177 are joined by a disulfide bond.

It belongs to the Rieske iron-sulfur protein family. In terms of assembly, the 4 large subunits of the cytochrome b6-f complex are cytochrome b6, subunit IV (17 kDa polypeptide, petD), cytochrome f and the Rieske protein, while the 4 small subunits are petG, petL, petM and petN. The complex functions as a dimer. The cofactor is [2Fe-2S] cluster.

It localises to the plastid. The protein resides in the chloroplast thylakoid membrane. It carries out the reaction 2 oxidized [plastocyanin] + a plastoquinol + 2 H(+)(in) = 2 reduced [plastocyanin] + a plastoquinone + 4 H(+)(out). In terms of biological role, component of the cytochrome b6-f complex, which mediates electron transfer between photosystem II (PSII) and photosystem I (PSI), cyclic electron flow around PSI, and state transitions. The chain is Cytochrome b6-f complex iron-sulfur subunit 1, chloroplastic (petC1) from Nicotiana tabacum (Common tobacco).